Consider the following 192-residue polypeptide: Ion-translocating oxidoreductase complex subunit B (192 aa).

Residues methionine 1–serine 26 form a hydrophobic region. In terms of domain architecture, 4Fe-4S spans glutamate 32–valine 91. [4Fe-4S] cluster contacts are provided by cysteine 49, cysteine 52, cysteine 57, cysteine 74, cysteine 117, cysteine 120, cysteine 123, cysteine 127, cysteine 147, cysteine 150, cysteine 153, and cysteine 157. 4Fe-4S ferredoxin-type domains follow at residues methionine 108 to arginine 137 and alanine 138 to valine 167.

Belongs to the 4Fe4S bacterial-type ferredoxin family. RnfB subfamily. In terms of assembly, the complex is composed of six subunits: RnfA, RnfB, RnfC, RnfD, RnfE and RnfG. Requires [4Fe-4S] cluster as cofactor.

It localises to the cell inner membrane. In terms of biological role, part of a membrane-bound complex that couples electron transfer with translocation of ions across the membrane. The protein is Ion-translocating oxidoreductase complex subunit B of Citrobacter koseri (strain ATCC BAA-895 / CDC 4225-83 / SGSC4696).